A 389-amino-acid polypeptide reads, in one-letter code: Ribonucleoside-diphosphate reductase subunit M2 (389 aa).

Serine 20 is modified (phosphoserine). A Phosphothreonine modification is found at threonine 33. The Cy signature appears at 49–51; sequence RRI. Positions 138, 169, and 172 each coordinate Fe cation. The active site involves tyrosine 176. Fe cation contacts are provided by glutamate 232, glutamate 266, and histidine 269.

The protein belongs to the ribonucleoside diphosphate reductase small chain family. As to quaternary structure, heterodimer of a large and a small subunit. Interacts (via Cy motif and when phosphorylated at Thr-33) with CCNF; the interaction occurs exclusively in G2 and early M. The cofactor is Fe cation. Phosphorylation on Ser-20 relieves the inhibitory effect on Wnt signaling. Phosphorylated on Thr-33 by CDK1 and CDK2; predominantly in G2 and M phase. Post-translationally, ubiquitinated by the SCF(CCNF) E3 ubiquitin-protein ligase complex; leading to its degradation by the proteasome.

Its subcellular location is the cytoplasm. The protein localises to the nucleus. It catalyses the reaction a 2'-deoxyribonucleoside 5'-diphosphate + [thioredoxin]-disulfide + H2O = a ribonucleoside 5'-diphosphate + [thioredoxin]-dithiol. Provides the precursors necessary for DNA synthesis. Catalyzes the biosynthesis of deoxyribonucleotides from the corresponding ribonucleotides. Inhibits Wnt signaling. In Macaca fascicularis (Crab-eating macaque), this protein is Ribonucleoside-diphosphate reductase subunit M2 (RRM2).